Here is a 310-residue protein sequence, read N- to C-terminus: Aspartate carbamoyltransferase catalytic subunit (310 aa).

Residues arginine 54 and threonine 55 each contribute to the carbamoyl phosphate site. Lysine 84 is an L-aspartate binding site. Carbamoyl phosphate contacts are provided by arginine 105, histidine 134, and glutamine 137. 2 residues coordinate L-aspartate: arginine 167 and arginine 229. Residues leucine 267 and proline 268 each contribute to the carbamoyl phosphate site.

It belongs to the aspartate/ornithine carbamoyltransferase superfamily. ATCase family. As to quaternary structure, heterododecamer (2C3:3R2) of six catalytic PyrB chains organized as two trimers (C3), and six regulatory PyrI chains organized as three dimers (R2).

The catalysed reaction is carbamoyl phosphate + L-aspartate = N-carbamoyl-L-aspartate + phosphate + H(+). Its pathway is pyrimidine metabolism; UMP biosynthesis via de novo pathway; (S)-dihydroorotate from bicarbonate: step 2/3. Functionally, catalyzes the condensation of carbamoyl phosphate and aspartate to form carbamoyl aspartate and inorganic phosphate, the committed step in the de novo pyrimidine nucleotide biosynthesis pathway. The sequence is that of Aspartate carbamoyltransferase catalytic subunit from Enterobacter sp. (strain 638).